A 159-amino-acid polypeptide reads, in one-letter code: Transcriptional repressor NrdR (159 aa).

A compositionally biased stretch (polar residues) spans 1–11; sequence MQCPTCQNTDS. The disordered stretch occupies residues 1-21; that stretch reads MQCPTCQNTDSRVLESRSADS. The segment at 3-34 is a zinc-finger region; sequence CPTCQNTDSRVLESRSADSGKSVRRRRECLNC. The ATP-cone domain occupies 49–139; the sequence is VSVLKKDGGR…VYRKFNGVKD (91 aa).

This sequence belongs to the NrdR family. Requires Zn(2+) as cofactor.

In terms of biological role, negatively regulates transcription of bacterial ribonucleotide reductase nrd genes and operons by binding to NrdR-boxes. This is Transcriptional repressor NrdR from Prochlorococcus marinus (strain AS9601).